Consider the following 474-residue polypeptide: PRAME family member 7 (474 aa).

The stretch at 97-122 is one LRR 1; degenerate repeat; the sequence is QSKLQVLDLRNVDENFCDIFSGATAS. The stretch at 177-201 is one LRR 2; degenerate repeat; it reads HVCCKELQVFGMPIHSIIEVLNMVE. The stretch at 202–228 is one LRR 3; degenerate repeat; the sequence is LDCIQEVEVCCPWELSTLVKFAPYLGQ. The stretch at 229–264 is one LRR 4; degenerate repeat; it reads MRNLRKLVLFNIRASACIPPDNKGQFIARFTSQFLK. 5 LRR repeats span residues 265 to 290, 291 to 322, 323 to 341, 347 to 374, and 375 to 399; these read LDYF…LRCL, QASL…RQLK, ELDL…PLTG, VATL…VLSR, and CSQL…LLRH.

Belongs to the PRAME family.

This chain is PRAME family member 7, found in Homo sapiens (Human).